The sequence spans 463 residues: Methionine aminopeptidase 2-1 (463 aa).

Residues 1 to 12 are compositionally biased toward basic and acidic residues; the sequence is MGSKTPDGHRQG. The tract at residues 1 to 96 is disordered; sequence MGSKTPDGHR…SGQQTTPPRV (96 aa). Over residues 41-53 the composition is skewed to acidic residues; sequence SGEDDEDGDDDEE. Residues 58–67 are compositionally biased toward polar residues; it reads DLNSRAQPNN. Basic residues predominate over residues 70–85; that stretch reads KKRKRKNNKKKKKKRP. His-215 lines the substrate pocket. Asp-236, Asp-247, and His-316 together coordinate a divalent metal cation. Substrate is bound at residue His-324. Residues Glu-349 and Glu-444 each contribute to the a divalent metal cation site.

The protein belongs to the peptidase M24A family. Methionine aminopeptidase eukaryotic type 2 subfamily. It depends on Co(2+) as a cofactor. The cofactor is Zn(2+). Mn(2+) is required as a cofactor. Fe(2+) serves as cofactor.

The protein localises to the cytoplasm. The catalysed reaction is Release of N-terminal amino acids, preferentially methionine, from peptides and arylamides.. In terms of biological role, cotranslationally removes the N-terminal methionine from nascent proteins. The N-terminal methionine is often cleaved when the second residue in the primary sequence is small and uncharged (Met-Ala-, Cys, Gly, Pro, Ser, Thr, or Val). This Arthroderma otae (strain ATCC MYA-4605 / CBS 113480) (Microsporum canis) protein is Methionine aminopeptidase 2-1.